The primary structure comprises 237 residues: MRPSGRAPDEMRAITIETGYTKHAEGSCLIGFGDTKVLCTASVEERLPPWLRGKGQGWVTGEYSMLPRATHTRGNREAARGKQSGRTQEIQRLIGRSLRAVVDLEKLGERQITLDCDVIQADGGTRTASISGAWIALRLAVSGLMEQGQIKDDPITGKIAAISCGIYNGTPVLDLDYAEDSNADADANFVLIEGGKIAEAQATAEGATYDEEGLMRLLRLAQIGCAQIFKSQDEATK.

Phosphate is bound by residues R86 and G124 to R126.

This sequence belongs to the RNase PH family. Homohexameric ring arranged as a trimer of dimers.

It catalyses the reaction tRNA(n+1) + phosphate = tRNA(n) + a ribonucleoside 5'-diphosphate. Phosphorolytic 3'-5' exoribonuclease that plays an important role in tRNA 3'-end maturation. Removes nucleotide residues following the 3'-CCA terminus of tRNAs; can also add nucleotides to the ends of RNA molecules by using nucleoside diphosphates as substrates, but this may not be physiologically important. Probably plays a role in initiation of 16S rRNA degradation (leading to ribosome degradation) during starvation. The protein is Ribonuclease PH of Erythrobacter litoralis (strain HTCC2594).